Consider the following 257-residue polypeptide: Probable dihydroorotate dehydrogenase B (NAD(+)), electron transfer subunit (257 aa).

The FAD-binding FR-type domain occupies 2 to 89; the sequence is EKPVICRIKE…RGPYGTYFEP (88 aa). The [2Fe-2S] cluster site is built by Cys208, Cys213, Cys216, and Cys226.

Belongs to the PyrK family. As to quaternary structure, heterotetramer of 2 PyrK and 2 PyrD type B subunits. [2Fe-2S] cluster serves as cofactor. FAD is required as a cofactor.

The protein operates within pyrimidine metabolism; UMP biosynthesis via de novo pathway; orotate from (S)-dihydroorotate (NAD(+) route): step 1/1. Its function is as follows. Responsible for channeling the electrons from the oxidation of dihydroorotate from the FMN redox center in the PyrD type B subunit to the ultimate electron acceptor NAD(+). This chain is Probable dihydroorotate dehydrogenase B (NAD(+)), electron transfer subunit, found in Methanocaldococcus jannaschii (strain ATCC 43067 / DSM 2661 / JAL-1 / JCM 10045 / NBRC 100440) (Methanococcus jannaschii).